A 76-amino-acid polypeptide reads, in one-letter code: Acyl carrier protein (76 aa).

The 76-residue stretch at 1 to 76 folds into the Carrier domain; it reads MAIFDDIKEV…DVVRYIETNK (76 aa). S36 carries the post-translational modification O-(pantetheine 4'-phosphoryl)serine.

It belongs to the acyl carrier protein (ACP) family. In terms of processing, 4'-phosphopantetheine is transferred from CoA to a specific serine of apo-ACP by AcpS. This modification is essential for activity because fatty acids are bound in thioester linkage to the sulfhydryl of the prosthetic group.

It is found in the cytoplasm. Its pathway is lipid metabolism; fatty acid biosynthesis. Functionally, carrier of the growing fatty acid chain in fatty acid biosynthesis. This Wolinella succinogenes (strain ATCC 29543 / DSM 1740 / CCUG 13145 / JCM 31913 / LMG 7466 / NCTC 11488 / FDC 602W) (Vibrio succinogenes) protein is Acyl carrier protein.